Consider the following 445-residue polypeptide: Phosphoglucosamine mutase 1 (445 aa).

The active-site Phosphoserine intermediate is Ser-102. Positions 102, 241, 243, and 245 each coordinate Mg(2+). A Phosphoserine modification is found at Ser-102.

This sequence belongs to the phosphohexose mutase family. Mg(2+) serves as cofactor. In terms of processing, activated by phosphorylation.

The enzyme catalyses alpha-D-glucosamine 1-phosphate = D-glucosamine 6-phosphate. Catalyzes the conversion of glucosamine-6-phosphate to glucosamine-1-phosphate. This Shewanella amazonensis (strain ATCC BAA-1098 / SB2B) protein is Phosphoglucosamine mutase 1.